A 246-amino-acid chain; its full sequence is Probable transcriptional regulatory protein CGSHiEE_01480 (246 aa).

The protein belongs to the TACO1 family.

The protein localises to the cytoplasm. The protein is Probable transcriptional regulatory protein CGSHiEE_01480 of Haemophilus influenzae (strain PittEE).